Consider the following 181-residue polypeptide: Succinate dehydrogenase [ubiquinone] cytochrome b small subunit, mitochondrial (181 aa).

The transit peptide at 1–31 (MMLPRSMKFMTGRRIFHTATVRAFQSTAKKS) directs the protein to the mitochondrion. Residues 32–66 (LTIPFLPVLPQKPGGVRGTPNDAYVPPPENKLEGS) lie on the Mitochondrial matrix side of the membrane. A helical transmembrane segment spans residues 67–88 (YHWYMEKIFALSVVPLATTAML). At 89-98 (TTGPLSTAAD) the chain is on the mitochondrial intermembrane side. A helical transmembrane segment spans residues 99 to 118 (SFFSVMLLGYCYMEFNSCIT). Cys109 serves as a coordination point for heme. The Mitochondrial matrix portion of the chain corresponds to 119 to 127 (DYISERVYG). A ubiquinone is bound at residue Tyr120. The chain crosses the membrane as a helical span at residues 128-148 (VWHKYAMYMLGLGSAVSLFGI). Residues 149 to 181 (YKLETENDGVVGLVKSLWDSSEKDNSQKIEAKK) lie on the Mitochondrial intermembrane side of the membrane.

The protein belongs to the CybS family. Forms part of complex II containing four subunits: a flavoprotein (FP), an iron-sulfur protein (IP) and a cytochrome b composed of a large and a small subunit.

It is found in the mitochondrion inner membrane. The protein operates within carbohydrate metabolism; tricarboxylic acid cycle. Membrane-anchoring subunit of succinate dehydrogenase (SDH) that is involved in system II of the mitochondrial electron transport chain and is responsible for transferring electrons from succinate to ubiquinone (coenzyme Q). SDH3 and SDH4 form the membrane dimer that anchors the catalytic dimer formed by SDH1 and SDH2 to the matrix surface of the mitochondrial inner membrane. Electrons originating from the catalytic dimer enter the membrane dimer for ubiquinone reduction. This is Succinate dehydrogenase [ubiquinone] cytochrome b small subunit, mitochondrial (SDH4) from Saccharomyces cerevisiae (strain ATCC 204508 / S288c) (Baker's yeast).